Consider the following 521-residue polypeptide: Alkyl hydroperoxide reductase subunit F (521 aa).

Residue 213-228 (DVLVVGGGPAGAAAAI) participates in FAD binding. A disulfide bridge connects residues C344 and C347. Residue 356 to 370 (RVAVIGGGNSGVEAA) coordinates NAD(+). 477 to 487 (TSLPGIFAAGD) contributes to the FAD binding site.

This sequence belongs to the class-II pyridine nucleotide-disulfide oxidoreductase family. Homodimer. FAD is required as a cofactor.

Functionally, serves to protect the cell against DNA damage by alkyl hydroperoxides. It can use either NADH or NADPH as electron donor for direct reduction of redox dyes or of alkyl hydroperoxides when combined with the AhpC protein. The polypeptide is Alkyl hydroperoxide reductase subunit F (ahpF) (Pseudomonas aeruginosa (strain ATCC 15692 / DSM 22644 / CIP 104116 / JCM 14847 / LMG 12228 / 1C / PRS 101 / PAO1)).